Here is a 1063-residue protein sequence, read N- to C-terminus: Kinesin-like protein KIN-7H (1063 aa).

Positions 18-342 (KIYVSVRMRP…LLFASCAKEV (325 aa)) constitute a Kinesin motor domain. ATP is bound at residue 106–113 (GQTSSGKT). A coiled-coil region spans residues 351 to 436 (VMSDKALVKH…KNQEKETLST (86 aa)). The interval 574–664 (SDISIGPVEN…ESNLTKNPAL (91 aa)) is disordered.

This sequence belongs to the TRAFAC class myosin-kinesin ATPase superfamily. Kinesin family. KIN-7 subfamily.

The polypeptide is Kinesin-like protein KIN-7H (Arabidopsis thaliana (Mouse-ear cress)).